Reading from the N-terminus, the 233-residue chain is MFKGILLCVLFAVLSANPLSQPEGFADEERDVRGLASLLGKALKATLKIGTHFLGGAPQQREANDERRFADGQQDYTGWMDFGRRDGQQDYTGWMDFGRRDDEDDVHERDVRGFGSFLGKALKAALKIGANALGGAPQQREANDERRFADGQQDYTGWMDFGRRDDEDDVNERDVRGFGSFLGKALKAALKIGANALGGSPQQREANDERRFADGQQDYTGWMDFGRRNGEDD.

The N-terminal stretch at 1-26 is a signal peptide; sequence MFKGILLCVLFAVLSANPLSQPEGFA. Positions 27–72 are excised as a propeptide; sequence DEERDVRGLASLLGKALKATLKIGTHFLGGAPQQREANDERRFADG. Q73 carries the post-translational modification Pyrrolidone carboxylic acid. Y76 bears the Sulfotyrosine mark. Phenylalanine amide is present on F82. A propeptide spanning residues 86–87 is cleaved from the precursor; sequence DG. Q88 is modified (pyrrolidone carboxylic acid). Y91 bears the Sulfotyrosine mark. A Phenylalanine amide modification is found at F97. The propeptide occupies 101–151; it reads DDEDDVHERDVRGFGSFLGKALKAALKIGANALGGAPQQREANDERRFADG. Q152 is modified (pyrrolidone carboxylic acid). Y155 is subject to Sulfotyrosine. A Phenylalanine amide modification is found at F161. The propeptide occupies 165–215; it reads DDEDDVNERDVRGFGSFLGKALKAALKIGANALGGSPQQREANDERRFADG. A disordered region spans residues 197 to 233; that stretch reads LGGSPQQREANDERRFADGQQDYTGWMDFGRRNGEDD. Q216 carries the pyrrolidone carboxylic acid modification. Y219 carries the post-translational modification Sulfotyrosine. Phenylalanine amide is present on F225. Residues 229 to 233 constitute a propeptide that is removed on maturation; that stretch reads NGEDD.

It belongs to the gastrin/cholecystokinin family. As to expression, expressed by the skin glands.

The protein resides in the secreted. The pharmacological activities of caerulein are quite similar to the physiological activities of gastrin and related peptides. In Xenopus laevis (African clawed frog), this protein is Preprocaerulein type-4.